A 206-amino-acid chain; its full sequence is Ribosomal RNA large subunit methyltransferase E (206 aa).

S-adenosyl-L-methionine is bound by residues G63, W65, D83, D99, and D124. K164 functions as the Proton acceptor in the catalytic mechanism.

This sequence belongs to the class I-like SAM-binding methyltransferase superfamily. RNA methyltransferase RlmE family.

It localises to the cytoplasm. It catalyses the reaction uridine(2552) in 23S rRNA + S-adenosyl-L-methionine = 2'-O-methyluridine(2552) in 23S rRNA + S-adenosyl-L-homocysteine + H(+). Its function is as follows. Specifically methylates the uridine in position 2552 of 23S rRNA at the 2'-O position of the ribose in the fully assembled 50S ribosomal subunit. The polypeptide is Ribosomal RNA large subunit methyltransferase E (Buchnera aphidicola subsp. Schizaphis graminum (strain Sg)).